We begin with the raw amino-acid sequence, 421 residues long: Probable sugar-binding periplasmic protein (421 aa).

Positions 1 to 27 (MHKLLKLAAMGTAACALLAGMAPVANA) are cleaved as a signal peptide.

The protein belongs to the bacterial solute-binding protein 1 family.

The protein resides in the periplasm. Its function is as follows. Part of a binding-protein-dependent transport system for a sugar. This Brucella suis biovar 1 (strain 1330) protein is Probable sugar-binding periplasmic protein.